A 304-amino-acid polypeptide reads, in one-letter code: Glutaminase (304 aa).

Substrate-binding residues include S63, N113, E157, N164, Y188, Y240, and V258.

This sequence belongs to the glutaminase family. In terms of assembly, homotetramer.

The catalysed reaction is L-glutamine + H2O = L-glutamate + NH4(+). The polypeptide is Glutaminase (Ralstonia nicotianae (strain ATCC BAA-1114 / GMI1000) (Ralstonia solanacearum)).